The primary structure comprises 917 residues: Protein Ami (917 aa).

Residues 1-30 (MKKLVKSAVVFAGLVFIGTSATMITEKASA) form the signal peptide. An N-acetylmuramoyl-L-alanine amidase domain is found at 118 to 245 (KPEGIVIHET…YLGGTTHTDP (128 aa)). The GW repeat region, necessary and sufficient for cell surface attachment stretch occupies residues 262–917 (LINEKYKAMQ…KAANLSAKKQ (656 aa)). GW domains follow at residues 279-358 (YDKA…TFYT), 361-435 (MEKT…TTKY), 440-519 (YDKA…TFYT), 522-596 (MEKN…ATQY), 601-679 (YDKA…TFYT), 682-756 (MEKT…TTKY), 761-840 (YDKA…TFYT), and 843-917 (MEKN…AKKQ).

It in the N-terminal section; belongs to the N-acetylmuramoyl-L-alanine amidase 2 family.

It localises to the cell surface. Its subcellular location is the cell membrane. In terms of biological role, a bacteriolysin able to lyse both L.monocytogenes and S.aureus. This is Protein Ami from Listeria monocytogenes serotype 1/2a (strain EGD / Mackaness).